We begin with the raw amino-acid sequence, 161 residues long: Putative defense protein 2 (161 aa).

The N-terminal stretch at 1–11 is a signal peptide; that stretch reads LSWSALALTSA. Residues 12 to 161 form the Reelin domain; sequence YPTGAPTSAC…SAPVKILSHH (150 aa). Cys21 and Cys98 form a disulfide bridge. The N-linked (GlcNAc...) asparagine glycan is linked to Asn91.

This sequence belongs to the insect defense protein family.

It is found in the secreted. May have antimicrobial activity. In Antheraea mylitta (Tasar silkworm), this protein is Putative defense protein 2.